Consider the following 702-residue polypeptide: Polyribonucleotide nucleotidyltransferase (702 aa).

Aspartate 485 and aspartate 491 together coordinate Mg(2+). In terms of domain architecture, KH spans 552 to 612 (PRTEIICIDP…EGVKKAISII (61 aa)). The 69-residue stretch at 622-690 (GEIYLGKVTK…NQGRINLSRK (69 aa)) folds into the S1 motif domain.

It belongs to the polyribonucleotide nucleotidyltransferase family. It depends on Mg(2+) as a cofactor.

The protein localises to the cytoplasm. The enzyme catalyses RNA(n+1) + phosphate = RNA(n) + a ribonucleoside 5'-diphosphate. In terms of biological role, involved in mRNA degradation. Catalyzes the phosphorolysis of single-stranded polyribonucleotides processively in the 3'- to 5'-direction. The polypeptide is Polyribonucleotide nucleotidyltransferase (Clostridium botulinum (strain Langeland / NCTC 10281 / Type F)).